Here is a 422-residue protein sequence, read N- to C-terminus: Proline--tRNA ligase (422 aa).

The protein belongs to the class-II aminoacyl-tRNA synthetase family. ProS type 2 subfamily. In terms of assembly, homodimer.

It is found in the cytoplasm. The enzyme catalyses tRNA(Pro) + L-proline + ATP = L-prolyl-tRNA(Pro) + AMP + diphosphate. Catalyzes the attachment of proline to tRNA(Pro) in a two-step reaction: proline is first activated by ATP to form Pro-AMP and then transferred to the acceptor end of tRNA(Pro). The chain is Proline--tRNA ligase from Wolbachia sp. subsp. Drosophila simulans (strain wRi).